The sequence spans 168 residues: 2-C-methyl-D-erythritol 2,4-cyclodiphosphate synthase (168 aa).

Residues Asp-11 and His-13 each coordinate a divalent metal cation. 4-CDP-2-C-methyl-D-erythritol 2-phosphate is bound by residues 11–13 and 38–39; these read DVH and HS. Position 46 (His-46) interacts with a divalent metal cation. 4-CDP-2-C-methyl-D-erythritol 2-phosphate-binding positions include 60–62, 133–136, Phe-140, and Arg-143; these read DIG and TTTD.

The protein belongs to the IspF family. As to quaternary structure, homotrimer. A divalent metal cation serves as cofactor.

It carries out the reaction 4-CDP-2-C-methyl-D-erythritol 2-phosphate = 2-C-methyl-D-erythritol 2,4-cyclic diphosphate + CMP. It participates in isoprenoid biosynthesis; isopentenyl diphosphate biosynthesis via DXP pathway; isopentenyl diphosphate from 1-deoxy-D-xylulose 5-phosphate: step 4/6. Involved in the biosynthesis of isopentenyl diphosphate (IPP) and dimethylallyl diphosphate (DMAPP), two major building blocks of isoprenoid compounds. Catalyzes the conversion of 4-diphosphocytidyl-2-C-methyl-D-erythritol 2-phosphate (CDP-ME2P) to 2-C-methyl-D-erythritol 2,4-cyclodiphosphate (ME-CPP) with a corresponding release of cytidine 5-monophosphate (CMP). This chain is 2-C-methyl-D-erythritol 2,4-cyclodiphosphate synthase, found in Cutibacterium acnes (strain DSM 16379 / KPA171202) (Propionibacterium acnes).